The sequence spans 283 residues: Pantothenate synthetase (283 aa).

30–37 (MGALHEGH) contributes to the ATP binding site. The active-site Proton donor is the H37. Q61 serves as a coordination point for (R)-pantoate. Position 61 (Q61) interacts with beta-alanine. Residue 150-153 (GRKD) coordinates ATP. Position 156 (Q156) interacts with (R)-pantoate. ATP-binding positions include V179 and 187-190 (MSSR).

This sequence belongs to the pantothenate synthetase family. As to quaternary structure, homodimer.

The protein resides in the cytoplasm. It carries out the reaction (R)-pantoate + beta-alanine + ATP = (R)-pantothenate + AMP + diphosphate + H(+). Its pathway is cofactor biosynthesis; (R)-pantothenate biosynthesis; (R)-pantothenate from (R)-pantoate and beta-alanine: step 1/1. In terms of biological role, catalyzes the condensation of pantoate with beta-alanine in an ATP-dependent reaction via a pantoyl-adenylate intermediate. The chain is Pantothenate synthetase from Rhodopirellula baltica (strain DSM 10527 / NCIMB 13988 / SH1).